Here is a 376-residue protein sequence, read N- to C-terminus: Cytoplasmic tRNA 2-thiolation protein 2 (376 aa).

The protein belongs to the CTU2/NCS2 family.

The protein localises to the cytoplasm. It functions in the pathway tRNA modification; 5-methoxycarbonylmethyl-2-thiouridine-tRNA biosynthesis. Functionally, plays a central role in 2-thiolation of mcm(5)S(2)U at tRNA wobble positions of tRNA(Lys), tRNA(Glu) and tRNA(Gln). May act by forming a heterodimer with NCS6 that ligates sulfur from thiocarboxylated URM1 onto the uridine of tRNAs at wobble position. Prior mcm(5) tRNA modification by the elongator complex is required for 2-thiolation. May also be involved in protein urmylation. The sequence is that of Cytoplasmic tRNA 2-thiolation protein 2 from Coccidioides immitis (strain RS) (Valley fever fungus).